Reading from the N-terminus, the 427-residue chain is Enolase (427 aa).

Position 163 (glutamine 163) interacts with (2R)-2-phosphoglycerate. Glutamate 205 serves as the catalytic Proton donor. Residues aspartate 242, glutamate 285, and aspartate 312 each coordinate Mg(2+). Lysine 337, arginine 366, serine 367, and lysine 388 together coordinate (2R)-2-phosphoglycerate. Lysine 337 (proton acceptor) is an active-site residue.

The protein belongs to the enolase family. Requires Mg(2+) as cofactor.

It is found in the cytoplasm. The protein resides in the secreted. It localises to the cell surface. It catalyses the reaction (2R)-2-phosphoglycerate = phosphoenolpyruvate + H2O. The protein operates within carbohydrate degradation; glycolysis; pyruvate from D-glyceraldehyde 3-phosphate: step 4/5. Catalyzes the reversible conversion of 2-phosphoglycerate (2-PG) into phosphoenolpyruvate (PEP). It is essential for the degradation of carbohydrates via glycolysis. The protein is Enolase of Bradyrhizobium diazoefficiens (strain JCM 10833 / BCRC 13528 / IAM 13628 / NBRC 14792 / USDA 110).